The primary structure comprises 622 residues: Dehydrogenase xptC (622 aa).

The signal sequence occupies residues 1 to 18; that stretch reads MAKLSVILLFRSLLLCGA. Residues 47–48, 68–69, and 123–126 each bind FAD; these read VS, EA, and NAMI. 5 N-linked (GlcNAc...) asparagine glycosylation sites follow: Asn160, Asn173, Asn357, Asn364, and Asn480. Residue 598–599 coordinates FAD; the sequence is PM.

It belongs to the GMC oxidoreductase family. As to quaternary structure, homodimer. FAD serves as cofactor.

The protein operates within secondary metabolite biosynthesis. Its function is as follows. Dehydrogenase involved in the conversion of monodictyphenone to the prenyl xanthones such as emericellin, shamixanthone and epishamixanthone. Monodictyphenone is first converted to variecoxanthone A via a paeciloxanthone intermediate by the consecutive actions of the FAD-dependent monooxygenase mdpD and the xanthone prenyltransferase xptB. XptB catalyzes regular O-prenylation at the hydroxy group of C-7 of the xanthone ring. Variecoxanthone A is further prenylated to emericellin by xptA before being reduced to shamixanthone and epishamixanthone by the dehydrogenase xptC. The polypeptide is Dehydrogenase xptC (Emericella nidulans (strain FGSC A4 / ATCC 38163 / CBS 112.46 / NRRL 194 / M139) (Aspergillus nidulans)).